The sequence spans 92 residues: Small ribosomal subunit protein uS19 (92 aa).

It belongs to the universal ribosomal protein uS19 family.

In terms of biological role, protein S19 forms a complex with S13 that binds strongly to the 16S ribosomal RNA. This chain is Small ribosomal subunit protein uS19, found in Rickettsia africae (strain ESF-5).